The following is a 237-amino-acid chain: Ribonuclease PH (237 aa).

Phosphate is bound by residues arginine 86 and 124–126 (GTR).

This sequence belongs to the RNase PH family. In terms of assembly, homohexameric ring arranged as a trimer of dimers.

The enzyme catalyses tRNA(n+1) + phosphate = tRNA(n) + a ribonucleoside 5'-diphosphate. Phosphorolytic 3'-5' exoribonuclease that plays an important role in tRNA 3'-end maturation. Removes nucleotide residues following the 3'-CCA terminus of tRNAs; can also add nucleotides to the ends of RNA molecules by using nucleoside diphosphates as substrates, but this may not be physiologically important. Probably plays a role in initiation of 16S rRNA degradation (leading to ribosome degradation) during starvation. The protein is Ribonuclease PH of Alteromonas mediterranea (strain DSM 17117 / CIP 110805 / LMG 28347 / Deep ecotype).